The chain runs to 120 residues: Secreted RxLR effector protein 29 (120 aa).

The first 21 residues, 1 to 21 (MRRTAFIVLSLVALIAPCVTS), serve as a signal peptide directing secretion. The RxLR-dEER signature appears at 47–64 (RHLRSEANGRLAVVDEEK).

It belongs to the RxLR effector family.

It localises to the secreted. Its subcellular location is the host cytoplasm. It is found in the host nucleus. Effector that acts as a broad suppressor of cell death to interrupt plant immunity. Inhibits cell death induced by cell death-inducing proteins, including the PAMP elicitor INF1 from P.infestans. The polypeptide is Secreted RxLR effector protein 29 (Plasmopara viticola (Downy mildew of grapevine)).